Here is a 229-residue protein sequence, read N- to C-terminus: Uracil-DNA glycosylase (229 aa).

Asp-65 serves as the catalytic Proton acceptor.

Belongs to the uracil-DNA glycosylase (UDG) superfamily. UNG family.

The protein resides in the cytoplasm. The enzyme catalyses Hydrolyzes single-stranded DNA or mismatched double-stranded DNA and polynucleotides, releasing free uracil.. Excises uracil residues from the DNA which can arise as a result of misincorporation of dUMP residues by DNA polymerase or due to deamination of cytosine. This is Uracil-DNA glycosylase from Oceanobacillus iheyensis (strain DSM 14371 / CIP 107618 / JCM 11309 / KCTC 3954 / HTE831).